Here is a 315-residue protein sequence, read N- to C-terminus: Small ribosomal subunit biogenesis GTPase RsgA (315 aa).

The 165-residue stretch at 79 to 243 (LSKESHILGA…LIDTPGIKGF (165 aa)) folds into the CP-type G domain. Residues 128-131 (NKID) and 182-190 (GHSGVGKSS) each bind GTP. Positions 267, 272, 274, and 280 each coordinate Zn(2+).

Belongs to the TRAFAC class YlqF/YawG GTPase family. RsgA subfamily. Monomer. Associates with 30S ribosomal subunit, binds 16S rRNA. Requires Zn(2+) as cofactor.

The protein localises to the cytoplasm. In terms of biological role, one of several proteins that assist in the late maturation steps of the functional core of the 30S ribosomal subunit. Helps release RbfA from mature subunits. May play a role in the assembly of ribosomal proteins into the subunit. Circularly permuted GTPase that catalyzes slow GTP hydrolysis, GTPase activity is stimulated by the 30S ribosomal subunit. This is Small ribosomal subunit biogenesis GTPase RsgA from Porphyromonas gingivalis (strain ATCC 33277 / DSM 20709 / CIP 103683 / JCM 12257 / NCTC 11834 / 2561).